The sequence spans 363 residues: DNA replication and repair protein RecF (363 aa).

Position 30–37 (30–37 (GPNGSGKT)) interacts with ATP.

This sequence belongs to the RecF family.

It is found in the cytoplasm. Its function is as follows. The RecF protein is involved in DNA metabolism; it is required for DNA replication and normal SOS inducibility. RecF binds preferentially to single-stranded, linear DNA. It also seems to bind ATP. This chain is DNA replication and repair protein RecF, found in Chlorobium limicola (strain DSM 245 / NBRC 103803 / 6330).